The primary structure comprises 188 residues: Protein GrpE (188 aa).

Positions 1 to 30 (MTKKTSHHKAEQKEKRAGEESGRESEVLDH) are disordered. A compositionally biased stretch (basic and acidic residues) spans 8–30 (HKAEQKEKRAGEESGRESEVLDH).

It belongs to the GrpE family. Homodimer.

It is found in the cytoplasm. In terms of biological role, participates actively in the response to hyperosmotic and heat shock by preventing the aggregation of stress-denatured proteins, in association with DnaK and GrpE. It is the nucleotide exchange factor for DnaK and may function as a thermosensor. Unfolded proteins bind initially to DnaJ; upon interaction with the DnaJ-bound protein, DnaK hydrolyzes its bound ATP, resulting in the formation of a stable complex. GrpE releases ADP from DnaK; ATP binding to DnaK triggers the release of the substrate protein, thus completing the reaction cycle. Several rounds of ATP-dependent interactions between DnaJ, DnaK and GrpE are required for fully efficient folding. This Chlorobium phaeobacteroides (strain BS1) protein is Protein GrpE.